A 142-amino-acid chain; its full sequence is Large ribosomal subunit protein uL22c (142 aa).

This sequence belongs to the universal ribosomal protein uL22 family. In terms of assembly, part of the 50S ribosomal subunit.

It is found in the plastid. It localises to the chloroplast. This protein binds specifically to 23S rRNA. Functionally, the globular domain of the protein is located near the polypeptide exit tunnel on the outside of the subunit, while an extended beta-hairpin is found that lines the wall of the exit tunnel in the center of the 70S ribosome. In Pinus koraiensis (Korean pine), this protein is Large ribosomal subunit protein uL22c (rpl22).